The sequence spans 68 residues: Sperm-associated antigen 11A (68 aa).

A signal peptide spans 1-19 (MKVLLLFAVFFCLVQRNSG). Intrachain disulfides connect Cys30–Cys59, Cys37–Cys52, and Cys42–Cys60.

It belongs to the beta-defensin family. Only expressed in epididymis (middle part of the caput).

The protein resides in the secreted. Its function is as follows. Has antimicrobial activity against E.coli. Plays a role in the defense response in the male reproductive tract, contributing to sperm maturation, storage and protection. This Rattus norvegicus (Rat) protein is Sperm-associated antigen 11A.